The primary structure comprises 147 residues: UPF0208 membrane protein PM0703 (147 aa).

The next 2 membrane-spanning stretches (helical) occupy residues 32-52 (VIKATLFAQKFMPFLAVFAIT) and 65-85 (LAIAVFSAIVALLIPLQGLYW).

This sequence belongs to the UPF0208 family.

Its subcellular location is the cell inner membrane. The polypeptide is UPF0208 membrane protein PM0703 (Pasteurella multocida (strain Pm70)).